A 221-amino-acid chain; its full sequence is Phosphoribosylformylglycinamidine synthase subunit PurQ (221 aa).

One can recognise a Glutamine amidotransferase type-1 domain in the interval 3 to 221 (AAVLVFPGSN…MFASLMQVMA (219 aa)). Cys-87 (nucleophile) is an active-site residue. Active-site residues include His-195 and Glu-197.

Part of the FGAM synthase complex composed of 1 PurL, 1 PurQ and 2 PurS subunits.

The protein localises to the cytoplasm. The catalysed reaction is N(2)-formyl-N(1)-(5-phospho-beta-D-ribosyl)glycinamide + L-glutamine + ATP + H2O = 2-formamido-N(1)-(5-O-phospho-beta-D-ribosyl)acetamidine + L-glutamate + ADP + phosphate + H(+). The enzyme catalyses L-glutamine + H2O = L-glutamate + NH4(+). It participates in purine metabolism; IMP biosynthesis via de novo pathway; 5-amino-1-(5-phospho-D-ribosyl)imidazole from N(2)-formyl-N(1)-(5-phospho-D-ribosyl)glycinamide: step 1/2. Functionally, part of the phosphoribosylformylglycinamidine synthase complex involved in the purines biosynthetic pathway. Catalyzes the ATP-dependent conversion of formylglycinamide ribonucleotide (FGAR) and glutamine to yield formylglycinamidine ribonucleotide (FGAM) and glutamate. The FGAM synthase complex is composed of three subunits. PurQ produces an ammonia molecule by converting glutamine to glutamate. PurL transfers the ammonia molecule to FGAR to form FGAM in an ATP-dependent manner. PurS interacts with PurQ and PurL and is thought to assist in the transfer of the ammonia molecule from PurQ to PurL. This is Phosphoribosylformylglycinamidine synthase subunit PurQ from Zymomonas mobilis subsp. mobilis (strain ATCC 31821 / ZM4 / CP4).